A 352-amino-acid polypeptide reads, in one-letter code: Quinolinate synthase (352 aa).

Residues His48 and Ser69 each contribute to the iminosuccinate site. Cys114 contacts [4Fe-4S] cluster. Iminosuccinate-binding positions include 140 to 142 (YAN) and Ser157. Cys201 is a binding site for [4Fe-4S] cluster. Residues 227–229 (HPE) and Thr244 each bind iminosuccinate. Cys298 provides a ligand contact to [4Fe-4S] cluster.

This sequence belongs to the quinolinate synthase family. Type 1 subfamily. [4Fe-4S] cluster serves as cofactor.

The protein localises to the cytoplasm. It carries out the reaction iminosuccinate + dihydroxyacetone phosphate = quinolinate + phosphate + 2 H2O + H(+). Its pathway is cofactor biosynthesis; NAD(+) biosynthesis; quinolinate from iminoaspartate: step 1/1. Its function is as follows. Catalyzes the condensation of iminoaspartate with dihydroxyacetone phosphate to form quinolinate. This Pseudomonas fluorescens (strain Pf0-1) protein is Quinolinate synthase.